The chain runs to 387 residues: 3-ketoacyl-CoA thiolase (387 aa).

Cysteine 91 serves as the catalytic Acyl-thioester intermediate. Catalysis depends on proton acceptor residues histidine 343 and cysteine 373.

This sequence belongs to the thiolase-like superfamily. Thiolase family. Heterotetramer of two alpha chains (FadB) and two beta chains (FadA).

The protein localises to the cytoplasm. The enzyme catalyses an acyl-CoA + acetyl-CoA = a 3-oxoacyl-CoA + CoA. The protein operates within lipid metabolism; fatty acid beta-oxidation. Functionally, catalyzes the final step of fatty acid oxidation in which acetyl-CoA is released and the CoA ester of a fatty acid two carbons shorter is formed. In Vibrio vulnificus (strain CMCP6), this protein is 3-ketoacyl-CoA thiolase.